A 151-amino-acid chain; its full sequence is Large ribosomal subunit protein uL22 (151 aa).

Over residues 1–18 (MARINYSINADPENTSKA) the composition is skewed to polar residues. The disordered stretch occupies residues 1-23 (MARINYSINADPENTSKAMGSEL).

The protein belongs to the universal ribosomal protein uL22 family. In terms of assembly, part of the 50S ribosomal subunit.

In terms of biological role, this protein binds specifically to 23S rRNA. It makes multiple contacts with different domains of the 23S rRNA in the assembled 50S subunit and ribosome. Functionally, the globular domain of the protein is located near the polypeptide exit tunnel on the outside of the subunit, while an extended beta-hairpin is found that lines the wall of the exit tunnel in the center of the 70S ribosome. The sequence is that of Large ribosomal subunit protein uL22 from Methanosarcina mazei (strain ATCC BAA-159 / DSM 3647 / Goe1 / Go1 / JCM 11833 / OCM 88) (Methanosarcina frisia).